The chain runs to 101 residues: Small integral membrane protein 21 (101 aa).

Residues 49–65 form a helical membrane-spanning segment; the sequence is HIRFFTLLVLFHVMVLL.

The protein localises to the membrane. The polypeptide is Small integral membrane protein 21 (SMIM21) (Homo sapiens (Human)).